A 240-amino-acid polypeptide reads, in one-letter code: UDP-2,3-diacylglucosamine hydrolase (240 aa).

Residues Asp-8, His-10, Asp-41, Asn-79, and His-114 each coordinate Mn(2+). Residue 79–80 (NR) participates in substrate binding. The substrate site is built by Asp-122, Ser-160, Asn-164, Lys-167, and His-195. Mn(2+) is bound by residues His-195 and His-197.

This sequence belongs to the LpxH family. Requires Mn(2+) as cofactor.

The protein localises to the cell inner membrane. It carries out the reaction UDP-2-N,3-O-bis[(3R)-3-hydroxytetradecanoyl]-alpha-D-glucosamine + H2O = 2-N,3-O-bis[(3R)-3-hydroxytetradecanoyl]-alpha-D-glucosaminyl 1-phosphate + UMP + 2 H(+). Its pathway is glycolipid biosynthesis; lipid IV(A) biosynthesis; lipid IV(A) from (3R)-3-hydroxytetradecanoyl-[acyl-carrier-protein] and UDP-N-acetyl-alpha-D-glucosamine: step 4/6. In terms of biological role, hydrolyzes the pyrophosphate bond of UDP-2,3-diacylglucosamine to yield 2,3-diacylglucosamine 1-phosphate (lipid X) and UMP by catalyzing the attack of water at the alpha-P atom. Involved in the biosynthesis of lipid A, a phosphorylated glycolipid that anchors the lipopolysaccharide to the outer membrane of the cell. The polypeptide is UDP-2,3-diacylglucosamine hydrolase (Escherichia coli O127:H6 (strain E2348/69 / EPEC)).